A 258-amino-acid polypeptide reads, in one-letter code: Undecaprenyl-diphosphatase (258 aa).

Transmembrane regions (helical) follow at residues 14–34 (AAGE…PWLL), 39–59 (QGLT…LIYF), 79–99 (GKIL…GVLF), 106–126 (VFRS…ILHL), 136–156 (VALN…ALMP), 176–196 (AESA…AAVL), 209–229 (AFIA…KFLM), and 237–257 (FNIF…TALM).

This sequence belongs to the UppP family.

It is found in the cell membrane. The enzyme catalyses di-trans,octa-cis-undecaprenyl diphosphate + H2O = di-trans,octa-cis-undecaprenyl phosphate + phosphate + H(+). In terms of biological role, catalyzes the dephosphorylation of undecaprenyl diphosphate (UPP). Confers resistance to bacitracin. This chain is Undecaprenyl-diphosphatase, found in Elusimicrobium minutum (strain Pei191).